Here is a 182-residue protein sequence, read N- to C-terminus: Putative manganese efflux pump MntP (182 aa).

6 consecutive transmembrane segments (helical) span residues leucine 6 to glycine 26, isoleucine 37 to valine 57, histidine 71 to leucine 91, isoleucine 101 to leucine 121, isoleucine 131 to isoleucine 151, and tyrosine 162 to isoleucine 182.

Belongs to the MntP (TC 9.B.29) family.

Its subcellular location is the cell membrane. Functionally, probably functions as a manganese efflux pump. This is Putative manganese efflux pump MntP from Bacillus cereus (strain G9842).